A 928-amino-acid chain; its full sequence is Probable outer membrane protein pmp11 (928 aa).

The N-terminal stretch at 1–24 (MKTSIPWVLVSSVLAFSCHLQSLA) is a signal peptide. In terms of domain architecture, Autotransporter spans 627-928 (GMEHKQGFWV…NVDVGTKLRF (302 aa)).

This sequence belongs to the PMP outer membrane protein family.

It is found in the secreted. It localises to the cell wall. The protein resides in the cell outer membrane. The sequence is that of Probable outer membrane protein pmp11 (pmp11) from Chlamydia pneumoniae (Chlamydophila pneumoniae).